Here is a 418-residue protein sequence, read N- to C-terminus: Dihydrolipoyllysine-residue acetyltransferase component of pyruvate dehydrogenase complex (418 aa).

In terms of domain architecture, Lipoyl-binding spans 2–78; that stretch reads PIKLLMPALS…PVNSLIAVLI (77 aa). An N6-lipoyllysine modification is found at K43. Residues 133 to 170 enclose the Peripheral subunit-binding (PSBD) domain; that stretch reads FASPLAKRLAKIQNVRIEEIKGSGPHGRIIKQDVLSHK. H388 is an active-site residue.

It belongs to the 2-oxoacid dehydrogenase family. In terms of assembly, forms a 24-polypeptide structural core with octahedral symmetry. (R)-lipoate serves as cofactor.

It carries out the reaction N(6)-[(R)-dihydrolipoyl]-L-lysyl-[protein] + acetyl-CoA = N(6)-[(R)-S(8)-acetyldihydrolipoyl]-L-lysyl-[protein] + CoA. In terms of biological role, the pyruvate dehydrogenase complex catalyzes the overall conversion of pyruvate to acetyl-CoA and CO(2). It contains multiple copies of three enzymatic components: pyruvate dehydrogenase (E1), dihydrolipoamide acetyltransferase (E2) and lipoamide dehydrogenase (E3). The polypeptide is Dihydrolipoyllysine-residue acetyltransferase component of pyruvate dehydrogenase complex (pdhC) (Rickettsia bellii (strain RML369-C)).